Here is a 372-residue protein sequence, read N- to C-terminus: Transaldolase (372 aa).

The active-site Schiff-base intermediate with substrate is the Lys140.

The protein belongs to the transaldolase family. Type 2 subfamily.

The protein localises to the cytoplasm. The enzyme catalyses D-sedoheptulose 7-phosphate + D-glyceraldehyde 3-phosphate = D-erythrose 4-phosphate + beta-D-fructose 6-phosphate. Its pathway is carbohydrate degradation; pentose phosphate pathway; D-glyceraldehyde 3-phosphate and beta-D-fructose 6-phosphate from D-ribose 5-phosphate and D-xylulose 5-phosphate (non-oxidative stage): step 2/3. In terms of biological role, transaldolase is important for the balance of metabolites in the pentose-phosphate pathway. The polypeptide is Transaldolase (Acidothermus cellulolyticus (strain ATCC 43068 / DSM 8971 / 11B)).